Consider the following 104-residue polypeptide: Protein E7 (104 aa).

Residues 1 to 49 are E7 terminal domain; sequence MRGNAPTLKDIILYDLPTCDPTTCDTPPVDLYCYEQFDTSDEDDEDDDQ. An LXCXE motif; interaction with host RB1 and TMEM173/STING motif is present at residues 31–35; the sequence is LYCYE. Residues 64 to 100 fold into a zinc finger; it reads CTQCGRSVKLVVSSTGADIQQLHQMLLDTLGIVCPLC. The Nuclear export signal signature appears at 82–90; the sequence is IQQLHQMLL.

The protein belongs to the papillomaviridae E7 protein family. Homodimer. Homooligomer. Interacts with host RB1; this interaction induces dissociation of RB1-E2F1 complex thereby disrupting RB1 activity. Interacts with host EP300; this interaction represses EP300 transcriptional activity. Interacts with protein E2; this interaction inhibits E7 oncogenic activity. Interacts with host TMEM173/STING; this interaction impairs the ability of TMEM173/STING to sense cytosolic DNA and promote the production of type I interferon (IFN-alpha and IFN-beta). In terms of processing, highly phosphorylated.

Its subcellular location is the host cytoplasm. It is found in the host nucleus. Plays a role in viral genome replication by driving entry of quiescent cells into the cell cycle. Stimulation of progression from G1 to S phase allows the virus to efficiently use the cellular DNA replicating machinery to achieve viral genome replication. E7 protein has both transforming and trans-activating activities. Induces the disassembly of the E2F1 transcription factor from RB1, with subsequent transcriptional activation of E2F1-regulated S-phase genes. Interferes with host histone deacetylation mediated by HDAC1 and HDAC2, leading to transcription activation. Also plays a role in the inhibition of both antiviral and antiproliferative functions of host interferon alpha. Interaction with host TMEM173/STING impairs the ability of TMEM173/STING to sense cytosolic DNA and promote the production of type I interferon (IFN-alpha and IFN-beta). The protein is Protein E7 of Homo sapiens (Human).